The chain runs to 105 residues: Pyrimidine/purine nucleoside phosphorylase (105 aa).

This sequence belongs to the nucleoside phosphorylase PpnP family.

The enzyme catalyses a purine D-ribonucleoside + phosphate = a purine nucleobase + alpha-D-ribose 1-phosphate. It carries out the reaction adenosine + phosphate = alpha-D-ribose 1-phosphate + adenine. The catalysed reaction is cytidine + phosphate = cytosine + alpha-D-ribose 1-phosphate. It catalyses the reaction guanosine + phosphate = alpha-D-ribose 1-phosphate + guanine. The enzyme catalyses inosine + phosphate = alpha-D-ribose 1-phosphate + hypoxanthine. It carries out the reaction thymidine + phosphate = 2-deoxy-alpha-D-ribose 1-phosphate + thymine. The catalysed reaction is uridine + phosphate = alpha-D-ribose 1-phosphate + uracil. It catalyses the reaction xanthosine + phosphate = alpha-D-ribose 1-phosphate + xanthine. Its function is as follows. Catalyzes the phosphorolysis of diverse nucleosides, yielding D-ribose 1-phosphate and the respective free bases. Can use uridine, adenosine, guanosine, cytidine, thymidine, inosine and xanthosine as substrates. Also catalyzes the reverse reactions. The chain is Pyrimidine/purine nucleoside phosphorylase from Paracidovorax citrulli (strain AAC00-1) (Acidovorax citrulli).